Here is a 383-residue protein sequence, read N- to C-terminus: BRISC and BRCA1-A complex member 2 (383 aa).

UEV-like regions lie at residues 30 to 147 (DATN…TLLE) and 275 to 364 (IAAF…RAKA).

This sequence belongs to the BABAM2 family. Component of the ARISC complex, at least composed of UIMC1/RAP80, ABRAXAS1, BRCC3/BRCC36, BABAM2 and BABAM1/NBA1. Component of the BRCA1-A complex, at least composed of BRCA1, BARD1, UIMC1/RAP80, ABRAXAS1, BRCC3/BRCC36, BABAM2 and BABAM1/NBA1. In the BRCA1-A complex, interacts directly with ABRAXAS1, BRCC3/BRCC36 and BABAM1/NBA1. Binds polyubiquitin. Component of the BRISC complex, at least composed of ABRAXAS2, BRCC3/BRCC36, BABAM2 and BABAM1/NBA1. Identified in a complex with SHMT2 and the other subunits of the BRISC complex. Component of the BRCA1/BRCA2 containing complex (BRCC), which also contains BRCA1, BRCA2, BARD1, BRCC3/BRCC36 and RAD51. BRCC is a ubiquitin E3 ligase complex that enhances cellular survival following DNA damage. May interact with FAS and TNFRSF1A.

The protein resides in the cytoplasm. It is found in the nucleus. In terms of biological role, component of the BRCA1-A complex, a complex that specifically recognizes 'Lys-63'-linked ubiquitinated histones H2A and H2AX at DNA lesions sites, leading to target the BRCA1-BARD1 heterodimer to sites of DNA damage at double-strand breaks (DSBs). The BRCA1-A complex also possesses deubiquitinase activity that specifically removes 'Lys-63'-linked ubiquitin on histones H2A and H2AX. In the BRCA1-A complex, it acts as an adapter that bridges the interaction between BABAM1/NBA1 and the rest of the complex, thereby being required for the complex integrity and modulating the E3 ubiquitin ligase activity of the BRCA1-BARD1 heterodimer. Component of the BRISC complex, a multiprotein complex that specifically cleaves 'Lys-63'-linked ubiquitin in various substrates. Within the BRISC complex, acts as an adapter that bridges the interaction between BABAM1/NBA1 and the rest of the complex, thereby being required for the complex integrity. The BRISC complex is required for normal mitotic spindle assembly and microtubule attachment to kinetochores via its role in deubiquitinating NUMA1. The BRISC complex plays a role in interferon signaling via its role in the deubiquitination of the interferon receptor IFNAR1; deubiquitination increases IFNAR1 activity by enhancing its stability and cell surface expression. Down-regulates the response to bacterial lipopolysaccharide (LPS) via its role in IFNAR1 deubiquitination. May play a role in homeostasis or cellular differentiation in cells of neural, epithelial and germline origins. May also act as a death receptor-associated anti-apoptotic protein, which inhibits the mitochondrial apoptotic pathway. May regulate TNF-alpha signaling through its interactions with TNFRSF1A; however these effects may be indirect. The sequence is that of BRISC and BRCA1-A complex member 2 (BABAM2) from Gallus gallus (Chicken).